The sequence spans 407 residues: Phosphopentomutase (407 aa).

The Mn(2+) site is built by D10, D306, H311, D347, H348, and H359.

This sequence belongs to the phosphopentomutase family. Requires Mn(2+) as cofactor.

The protein localises to the cytoplasm. The enzyme catalyses 2-deoxy-alpha-D-ribose 1-phosphate = 2-deoxy-D-ribose 5-phosphate. It carries out the reaction alpha-D-ribose 1-phosphate = D-ribose 5-phosphate. The protein operates within carbohydrate degradation; 2-deoxy-D-ribose 1-phosphate degradation; D-glyceraldehyde 3-phosphate and acetaldehyde from 2-deoxy-alpha-D-ribose 1-phosphate: step 1/2. In terms of biological role, isomerase that catalyzes the conversion of deoxy-ribose 1-phosphate (dRib-1-P) and ribose 1-phosphate (Rib-1-P) to deoxy-ribose 5-phosphate (dRib-5-P) and ribose 5-phosphate (Rib-5-P), respectively. This is Phosphopentomutase from Pectobacterium atrosepticum (strain SCRI 1043 / ATCC BAA-672) (Erwinia carotovora subsp. atroseptica).